Reading from the N-terminus, the 235-residue chain is Small ribosomal subunit protein uS3 (235 aa).

The KH type-2 domain occupies 39-107; that stretch reads VRKFLNKELA…PAQINIAEVK (69 aa). Residues 215 to 235 form a disordered region; the sequence is AQSEQQPADKPKKAPRGKGRK.

It belongs to the universal ribosomal protein uS3 family. In terms of assembly, part of the 30S ribosomal subunit. Forms a tight complex with proteins S10 and S14.

In terms of biological role, binds the lower part of the 30S subunit head. Binds mRNA in the 70S ribosome, positioning it for translation. This chain is Small ribosomal subunit protein uS3, found in Haemophilus influenzae (strain PittEE).